The primary structure comprises 543 residues: MSEELSQKPSSAQSLSLREGRNRFPFLSLSQREGRFFPSLSLSERDGRKFSFLSMFSFLMPLLEVIKIIIASVASVIFVGFACVTLAGSAAALVVSTPVFIIFSPVLVPATIATVVLATGFTAGGSFGATALGLIMWLVKRRMGVKPKDNPPPAGLPPNSGAGAGGAQSLIKKSKAKSKGGLKAWCKKMLKSKFGGKKGKSGGGKSKFGGKGGKSEGEEGMSSGDEGMSGSEGGMSGGEGGKSKSGKGKLKAKLEKKKGMSGGSESEEGMSGSEGGMSGGGGSKSKSKKSKLKAKLGKKKGMSGGMSGSEEGMSGSEGGMSSGGGSKSKSKKSKLKAKLGKKKSMSGGMSGSEEGMSGSEGGMSGGGGGKSKSRKSKLKANLGKKKCMSGGMSGSEGGMSRSEGGISGGGMSGGSGSKHKIGGGKHGGLGGKFGKKRGMSGSGGGMSGSEGGVSGSEGSMSGGGMSGGSGSKHKIGGGKHGGLRGKFGKKRGMSGSEGGMSGSEGGMSESGMSGSGGGKHKIGGGKHKFGGGKHGGGGGHMAE.

The interval Met-1–Lys-67 is polar. A run of 3 helical transmembrane segments spans residues Ile-68–Gly-88, Pro-98–Ala-118, and Thr-119–Val-139. Residues Ile-68–Ala-162 form a hydrophobic region. 2 disordered regions span residues Lys-148 to Ser-169 and Gly-195 to Glu-543. Residues Ser-201–Gly-212 show a composition bias toward gly residues. 3 repeat units span residues Gly-220–Ser-223, Gly-227–Gly-230, and Gly-234–Gly-237. Low complexity predominate over residues Gly-220–Ser-229. The 29 X 4 AA approximate tandem repeats of G-M-S-G stretch occupies residues Gly-220–Gly-514. The span at Gly-230 to Gly-240 shows a compositional bias: gly residues. Over residues Lys-244 to Lys-256 the composition is skewed to basic residues. 26 consecutive repeat copies span residues Gly-259–Gly-262, Gly-269–Gly-272, Gly-276–Gly-279, Gly-301–Gly-304, Gly-305–Gly-308, Gly-312–Gly-315, Gly-319–Ser-322, Ser-344–Gly-347, Gly-348–Gly-351, Gly-355–Gly-358, Gly-362–Gly-365, Cys-387–Gly-390, Gly-391–Gly-394, Gly-398–Arg-401, Gly-405–Gly-408, Gly-410–Gly-413, Gly-414–Ser-417, Gly-438–Gly-441, Gly-445–Gly-448, Gly-458–Ser-461, Gly-464–Gly-467, Gly-468–Ser-471, Gly-492–Gly-495, Gly-499–Gly-502, Gly-506–Glu-509, and Gly-511–Gly-514. The segment covering Gly-272–Ser-283 has biased composition (gly residues). Basic residues predominate over residues Ser-285–Gly-301. A compositionally biased stretch (gly residues) spans Gly-315–Ser-326. The span at Ser-328–Ser-344 shows a compositional bias: basic residues. Low complexity predominate over residues Met-345–Ser-357. Positions Gly-358–Lys-370 are enriched in gly residues. The span at Ser-371–Cys-387 shows a compositional bias: basic residues. Gly residues-rich tracts occupy residues Gly-405–Gly-416 and Ser-440–Gly-470. Basic residues predominate over residues Ser-471–Gly-492. Residues Gly-495–Gly-505 show a composition bias toward gly residues. Residues Gly-518–Gly-531 are compositionally biased toward basic residues. Residues Gly-532 to Glu-543 show a composition bias toward gly residues.

This sequence belongs to the oleosin family. Proteolytically cleaved following anther tapetal breakdown. In terms of tissue distribution, flower specific, especially in anther tapetum, pollen (at protein level) and flowers florets.

Its subcellular location is the secreted. The protein resides in the extracellular space. It is found in the extracellular matrix. It localises to the pollen coat. The protein localises to the lipid droplet. Its subcellular location is the membrane. Lipid-binding oleosin pollen coat protein required to mediate pollen recognition by stigma cells and subsequent pollen hydration. Involved in anther tapetum development, especially for the physiology of tapetosomes. Also implicated in the formation of pollen coat. The sequence is that of Tapetal oleosin GRP-17 from Arabidopsis thaliana (Mouse-ear cress).